Consider the following 60-residue polypeptide: Large ribosomal subunit protein uL30 (60 aa).

It belongs to the universal ribosomal protein uL30 family. In terms of assembly, part of the 50S ribosomal subunit.

In Bacillus mycoides (strain KBAB4) (Bacillus weihenstephanensis), this protein is Large ribosomal subunit protein uL30.